The chain runs to 65 residues: Toxin KTx8 (65 aa).

An N-terminal signal peptide occupies residues 1–25 (MNKVCFVVVLVLFVALAAYVSPIEG). Intrachain disulfides connect Cys-31/Cys-53, Cys-38/Cys-61, and Cys-42/Cys-63.

It belongs to the short scorpion toxin superfamily. Potassium channel inhibitor family. Alpha-KTx 11 subfamily. In terms of tissue distribution, expressed by the venom gland.

The protein localises to the secreted. In terms of biological role, this recombinant toxin inhibits the mammalian voltage-gated potassium channels Kv1.3/KCNA3 in vitro with an IC(50) of 26.40 nM. The sequence is that of Toxin KTx8 from Lychas mucronatus (Chinese swimming scorpion).